The sequence spans 284 residues: MPKILCLHGYGTSASILQHQLGPFMAAADPSYEFVFLEGEIECQKAQGLGPFVKGPFLCYNESFAPADIQESCDLIDEMIQAAGPFDGIIGFSQGGSVALSYLLQRQIDGHPPPFRWAVFFSTVIAFAPNDTFGSNILANLTDHEIRLLDGYPATDLSSLHPLTRALCETTAQTFYSAKTGGFISPNTPIAEFSKRDDPSQPRVFHPALLGDRIPIPTVHITGRKDNSLMVGLSVLVQGLCDQRLIRSLTHSGGHNVPRSADDVRAAWAAVDWAIQHSQKQHIW.

Catalysis depends on charge relay system residues Ser93, Asp226, and His255.

Belongs to the LovG family.

It participates in polyketide biosynthesis. Esterase; part of the gene cluster that mediates the biosynthesis of asperlin, a polyketide showing anti-inflammatory, antitumor and antibiotic activities. The first step of the asperlin biosynthesis is the production of the intermediate 2,4,6-octatrienoic acid by the highly redusing polyketide synthase alnA with cleavage of the PKS product by the esterase alnB. 2,4,6-octatrienoic acid is further converted to asperlin via several steps involving the remaining enzymes from the cluster. The protein is Esterase alnB of Emericella nidulans (strain FGSC A4 / ATCC 38163 / CBS 112.46 / NRRL 194 / M139) (Aspergillus nidulans).